Reading from the N-terminus, the 235-residue chain is Meiotically up-regulated gene 123 protein (235 aa).

Basic and acidic residues predominate over residues 1 to 14 (MERLATRSSHDDPY). Disordered regions lie at residues 1–34 (MERL…SNGS), 58–83 (PLHS…GGMR), and 169–235 (SRAD…FDSD). The segment covering 15–34 (SRSSLPTSNAINSNHESNGS) has biased composition (polar residues). A compositionally biased stretch (low complexity) spans 61 to 77 (SSPSIKSSSQNGKSSSK). The segment covering 176–202 (ETTQSDGFESRSGSPTHDIQSYLVNRR) has biased composition (polar residues). A phosphoserine mark is found at Ser180, Ser187, and Ser189. Thr191 carries the post-translational modification Phosphothreonine.

The protein resides in the cytoplasm. It is found in the nucleus. In terms of biological role, involved in sporulation and has a role in meiosis. In Schizosaccharomyces pombe (strain 972 / ATCC 24843) (Fission yeast), this protein is Meiotically up-regulated gene 123 protein (mug123).